We begin with the raw amino-acid sequence, 297 residues long: tRNA-cytidine(32) 2-sulfurtransferase (297 aa).

The short motif at 45 to 50 (SGGKDS) is the PP-loop motif element. Residues cysteine 120, cysteine 123, and cysteine 211 each contribute to the [4Fe-4S] cluster site.

This sequence belongs to the TtcA family. Homodimer. Mg(2+) is required as a cofactor. It depends on [4Fe-4S] cluster as a cofactor.

The protein localises to the cytoplasm. It catalyses the reaction cytidine(32) in tRNA + S-sulfanyl-L-cysteinyl-[cysteine desulfurase] + AH2 + ATP = 2-thiocytidine(32) in tRNA + L-cysteinyl-[cysteine desulfurase] + A + AMP + diphosphate + H(+). The protein operates within tRNA modification. Catalyzes the ATP-dependent 2-thiolation of cytidine in position 32 of tRNA, to form 2-thiocytidine (s(2)C32). The sulfur atoms are provided by the cysteine/cysteine desulfurase (IscS) system. In Vibrio parahaemolyticus serotype O3:K6 (strain RIMD 2210633), this protein is tRNA-cytidine(32) 2-sulfurtransferase.